A 344-amino-acid chain; its full sequence is MVRIKDIALKAKVSSATVSRILNEDESLSVAGETRQRVINIAEELGYQTVAKRRKSRGQKQRAQPLIGVLSCLSPDQERQDPYFSSIRKGIEKECFEQEIFITNSIHLGSFQEHIFRELDGVIVIGRVHDEAVKHISGRLEHAVFINHSPDPQAYDSIGIDFESASRQAIDHLFDLGYKRLGYIGGQEKEHTLKDGQSIRRTIEDKRLTAFLESAAPQPEHVLIGEYSMREGYRLMKKAIDQGHLPEAFFIASDSMAIGALKALQEAGLQVPRDTAIVSFNGIEEAEFASTPLTTVKVYTEEMGRTGVKLLLDRLNGRTLPQHVTLPTTLIVRQSCGCTAKEVT.

Positions 2–58 constitute an HTH lacI-type domain; the sequence is VRIKDIALKAKVSSATVSRILNEDESLSVAGETRQRVINIAEELGYQTVAKRRKSRG. The segment at residues 4-23 is a DNA-binding region (H-T-H motif); that stretch reads IKDIALKAKVSSATVSRILN.

Its subcellular location is the cytoplasm. Functionally, represses the melibiose operon melREDCA in the absence of melibiose or raffinose. Binds to two binding sites at the promoter region of the operon. This Bacillus subtilis (strain 168) protein is HTH-type transcriptional repressor MelR.